The following is a 319-amino-acid chain: Porphobilinogen deaminase 1 (319 aa).

An S-(dipyrrolylmethanemethyl)cysteine modification is found at C244.

Belongs to the HMBS family. As to quaternary structure, monomer. Requires dipyrromethane as cofactor.

It carries out the reaction 4 porphobilinogen + H2O = hydroxymethylbilane + 4 NH4(+). It functions in the pathway porphyrin-containing compound metabolism; protoporphyrin-IX biosynthesis; coproporphyrinogen-III from 5-aminolevulinate: step 2/4. Its function is as follows. Tetrapolymerization of the monopyrrole PBG into the hydroxymethylbilane pre-uroporphyrinogen in several discrete steps. The sequence is that of Porphobilinogen deaminase 1 (hemC1) from Streptomyces coelicolor (strain ATCC BAA-471 / A3(2) / M145).